Consider the following 905-residue polypeptide: DNA gyrase subunit A (905 aa).

One can recognise a Topo IIA-type catalytic domain in the interval 35 to 524; it reads IPDVRDGLKP…GEFDQDIEDL (490 aa). The active-site O-(5'-phospho-DNA)-tyrosine intermediate is tyrosine 123. Residues 551 to 557 carry the GyrA-box motif; sequence QKRGGKG.

This sequence belongs to the type II topoisomerase GyrA/ParC subunit family. Heterotetramer, composed of two GyrA and two GyrB chains. In the heterotetramer, GyrA contains the active site tyrosine that forms a transient covalent intermediate with DNA, while GyrB binds cofactors and catalyzes ATP hydrolysis.

Its subcellular location is the cytoplasm. It catalyses the reaction ATP-dependent breakage, passage and rejoining of double-stranded DNA.. Its function is as follows. A type II topoisomerase that negatively supercoils closed circular double-stranded (ds) DNA in an ATP-dependent manner to modulate DNA topology and maintain chromosomes in an underwound state. Negative supercoiling favors strand separation, and DNA replication, transcription, recombination and repair, all of which involve strand separation. Also able to catalyze the interconversion of other topological isomers of dsDNA rings, including catenanes and knotted rings. Type II topoisomerases break and join 2 DNA strands simultaneously in an ATP-dependent manner. The sequence is that of DNA gyrase subunit A from Rickettsia typhi (strain ATCC VR-144 / Wilmington).